The primary structure comprises 267 residues: NAD kinase 2 (267 aa).

Asp52 (proton acceptor) is an active-site residue. NAD(+)-binding positions include Asp52–Ala53, Asn124–Glu125, Arg151, Asp153, Thr164–Ser169, and Ala188.

The protein belongs to the NAD kinase family. Requires a divalent metal cation as cofactor.

Its subcellular location is the cytoplasm. The catalysed reaction is NAD(+) + ATP = ADP + NADP(+) + H(+). Functionally, involved in the regulation of the intracellular balance of NAD and NADP, and is a key enzyme in the biosynthesis of NADP. Catalyzes specifically the phosphorylation on 2'-hydroxyl of the adenosine moiety of NAD to yield NADP. The chain is NAD kinase 2 from Bacillus anthracis.